The sequence spans 243 residues: Small ribosomal subunit protein eS4 (243 aa).

Residues 37 to 99 form the S4 RNA-binding domain; sequence IPLALLLKHY…SDLYFRIVPD (63 aa).

This sequence belongs to the eukaryotic ribosomal protein eS4 family.

In Sulfurisphaera tokodaii (strain DSM 16993 / JCM 10545 / NBRC 100140 / 7) (Sulfolobus tokodaii), this protein is Small ribosomal subunit protein eS4 (rps4e).